The chain runs to 502 residues: Lysine--tRNA ligase (502 aa).

The Mg(2+) site is built by glutamate 398 and glutamate 405.

Belongs to the class-II aminoacyl-tRNA synthetase family. In terms of assembly, homodimer. It depends on Mg(2+) as a cofactor.

Its subcellular location is the cytoplasm. It catalyses the reaction tRNA(Lys) + L-lysine + ATP = L-lysyl-tRNA(Lys) + AMP + diphosphate. This Thermosipho africanus (strain TCF52B) protein is Lysine--tRNA ligase.